We begin with the raw amino-acid sequence, 461 residues long: Ribonuclease inhibitor (461 aa).

The residue at position 2 (S2) is an N-acetylserine. The 2 X 5 AA tandem repeats of S-L-D-I-Q stretch occupies residues 2-11 (SLDIQSLDIQ). LRR repeat units lie at residues 20 to 48 (WAEL…CKDI), 49 to 76 (SSAL…VHCV), 77 to 105 (LQGL…CGVL), 106 to 133 (SSTL…LQLL), 134 to 162 (CEGL…CKPL), 163 to 190 (ASVL…VRVL), 191 to 219 (CQGL…CRDL), 220 to 247 (CGIV…MAEL), 248 to 276 (CPGL…CGDL), 277 to 304 (CRVL…ARLL), 305 to 333 (CETL…CSHF), 334 to 361 (SSVL…VQEL), 362 to 390 (CQGL…CSSL), 391 to 418 (AATL…ILQL), and 419 to 447 (VESV…EDRL). S91 bears the Phosphoserine mark.

In terms of assembly, forms high-affinity heterodimers with RNASE1, ANG and RNASE2.

The protein resides in the cytoplasm. The protein localises to the nucleus. In terms of biological role, ribonuclease inhibitor which inhibits RNASE1, RNASE2 and angiogenin (ANG). May play a role in redox homeostasis. Required to inhibit the cytotoxic tRNA ribonuclease activity of ANG in the cytoplasm in absence of stress. Relocates to the nucleus in response to stress, relieving inhibition of ANG in the cytoplasm, and inhibiting the angiogenic activity of ANG in the nucleus. The sequence is that of Ribonuclease inhibitor (RNH1) from Pan troglodytes (Chimpanzee).